A 170-amino-acid polypeptide reads, in one-letter code: ATP synthase subunit b (170 aa).

Residues L25 to I45 traverse the membrane as a helical segment. The tract at residues E121–S147 is disordered. Residues V122–Q139 show a composition bias toward polar residues.

Belongs to the ATPase B chain family. In terms of assembly, F-type ATPases have 2 components, F(1) - the catalytic core - and F(0) - the membrane proton channel. F(1) has five subunits: alpha(3), beta(3), gamma(1), delta(1), epsilon(1). F(0) has three main subunits: a(1), b(2) and c(10-14). The alpha and beta chains form an alternating ring which encloses part of the gamma chain. F(1) is attached to F(0) by a central stalk formed by the gamma and epsilon chains, while a peripheral stalk is formed by the delta and b chains.

Its subcellular location is the cell membrane. Functionally, f(1)F(0) ATP synthase produces ATP from ADP in the presence of a proton or sodium gradient. F-type ATPases consist of two structural domains, F(1) containing the extramembraneous catalytic core and F(0) containing the membrane proton channel, linked together by a central stalk and a peripheral stalk. During catalysis, ATP synthesis in the catalytic domain of F(1) is coupled via a rotary mechanism of the central stalk subunits to proton translocation. Its function is as follows. Component of the F(0) channel, it forms part of the peripheral stalk, linking F(1) to F(0). The protein is ATP synthase subunit b of Mycolicibacterium smegmatis (strain ATCC 700084 / mc(2)155) (Mycobacterium smegmatis).